Consider the following 519-residue polypeptide: Circadian clock oscillator protein KaiC (519 aa).

2 consecutive KaiC domains span residues 1–246 (MSEK…VNIF) and 260–519 (VRVS…GSDS). Gly-48, Thr-49, Gly-50, Lys-51, Thr-52, Leu-53, Lys-223, Leu-224, Arg-225, Thr-227, His-229, Thr-239, Thr-289, Gly-290, Thr-291, Gly-292, Lys-293, Thr-294, and Leu-295 together coordinate ATP. Thr-52 provides a ligand contact to Mg(2+). Thr-294 contributes to the Mg(2+) binding site. A Mg(2+)-binding site is contributed by Glu-317. An ATP-binding site is contributed by Trp-330. Phosphoserine; by autocatalysis is present on Ser-430. A Phosphothreonine; by autocatalysis modification is found at Thr-431. ATP is bound by residues Arg-450, Lys-456, Met-457, Arg-458, Ser-460, His-462, and Lys-464.

This sequence belongs to the KaiC family. In terms of assembly, homohexamer; hexamerization is dependent on ATP-binding. The KaiABC complex composition changes during the circadian cycle to control KaiC phosphorylation. Complexes KaiC(6), KaiA(2-4):KaiC(6), KaiB(6):KaiC(6) and KaiC(6):KaiB(6):KaiA(12) are among the most important forms, many form cooperatively. KaiC interacts with SasA, activating its autokinase function and leading to RpaA activation. Mg(2+) serves as cofactor. In terms of processing, phosphorylated on serine and threonine residues by autocatalysis. Has a 4 step phosphorylation cycle; the autokinase acts first on Thr-431, then Ser-430. When Ser-430 is modified KaiC switches to an autophosphatase mode, acting first on phospho-Thr-431 then phospho-Ser-430.

It catalyses the reaction L-seryl-[protein] + ATP = O-phospho-L-seryl-[protein] + ADP + H(+). It carries out the reaction L-threonyl-[protein] + ATP = O-phospho-L-threonyl-[protein] + ADP + H(+). The catalysed reaction is ATP + H2O = ADP + phosphate + H(+). Its activity is regulated as follows. The interaction with KaiA enhances its phosphorylation status, while the interaction with KaiB decreases it. In terms of biological role, central component of the KaiABC oscillator complex, which constitutes the main circadian regulator in cyanobacteria. Complex composition changes during the circadian cycle to control KaiC phosphorylation. KaiA stimulates KaiC autophosphorylation, while KaiB sequesters KaiA, leading to KaiC autodephosphorylation. Clock output pathways impact the RpaA transcriptional regulator. KaiC enhances the autophosphorylation activity of SasA, which then transfers its phosphate group to RpaA to activate it. KaiB and KaiC together enhance the phospho-RpaA dephosphatase activity of CikA. Has a weak, temperature-independent ATPase activity; ATPase activity defines the circadian period. The phosphorylation state of KaiC modulates its ATPase activity and effects KaiB binding. The protein is Circadian clock oscillator protein KaiC of Nostoc sp. (strain PCC 7120 / SAG 25.82 / UTEX 2576).